The primary structure comprises 143 residues: UPF0201 protein PAE1632 (143 aa).

The protein belongs to the UPF0201 family.

The protein is UPF0201 protein PAE1632 of Pyrobaculum aerophilum (strain ATCC 51768 / DSM 7523 / JCM 9630 / CIP 104966 / NBRC 100827 / IM2).